We begin with the raw amino-acid sequence, 236 residues long: Small ribosomal subunit protein uS2c (236 aa).

This sequence belongs to the universal ribosomal protein uS2 family.

Its subcellular location is the plastid. This chain is Small ribosomal subunit protein uS2c (rps2), found in Cuscuta gronovii (Common dodder).